The sequence spans 492 residues: N-succinylglutamate 5-semialdehyde dehydrogenase (492 aa).

220–225 (GSANTG) provides a ligand contact to NAD(+). Catalysis depends on residues glutamate 243 and cysteine 277.

The protein belongs to the aldehyde dehydrogenase family. AstD subfamily.

The catalysed reaction is N-succinyl-L-glutamate 5-semialdehyde + NAD(+) + H2O = N-succinyl-L-glutamate + NADH + 2 H(+). Its pathway is amino-acid degradation; L-arginine degradation via AST pathway; L-glutamate and succinate from L-arginine: step 4/5. In terms of biological role, catalyzes the NAD-dependent reduction of succinylglutamate semialdehyde into succinylglutamate. The sequence is that of N-succinylglutamate 5-semialdehyde dehydrogenase from Escherichia coli (strain ATCC 8739 / DSM 1576 / NBRC 3972 / NCIMB 8545 / WDCM 00012 / Crooks).